Consider the following 460-residue polypeptide: Cytochrome P450 CYP71D312 (460 aa).

Position 398 (cysteine 398) interacts with heme.

This sequence belongs to the cytochrome P450 family. Requires heme as cofactor.

Functionally, probable heme-thiolate monooxygenase. The chain is Cytochrome P450 CYP71D312 from Panax ginseng (Korean ginseng).